We begin with the raw amino-acid sequence, 648 residues long: Threonine--tRNA ligase (648 aa).

The TGS domain occupies Met1 to Thr61. A catalytic region spans residues Asp242–Pro540. Residues Cys336, His387, and His517 each coordinate Zn(2+).

Belongs to the class-II aminoacyl-tRNA synthetase family. As to quaternary structure, homodimer. It depends on Zn(2+) as a cofactor.

Its subcellular location is the cytoplasm. The enzyme catalyses tRNA(Thr) + L-threonine + ATP = L-threonyl-tRNA(Thr) + AMP + diphosphate + H(+). Functionally, catalyzes the attachment of threonine to tRNA(Thr) in a two-step reaction: L-threonine is first activated by ATP to form Thr-AMP and then transferred to the acceptor end of tRNA(Thr). Also edits incorrectly charged L-seryl-tRNA(Thr). In Streptococcus equi subsp. zooepidemicus (strain H70), this protein is Threonine--tRNA ligase.